Consider the following 103-residue polypeptide: Large ribosomal subunit protein bL21 (103 aa).

Belongs to the bacterial ribosomal protein bL21 family. Part of the 50S ribosomal subunit. Contacts protein L20.

In terms of biological role, this protein binds to 23S rRNA in the presence of protein L20. The chain is Large ribosomal subunit protein bL21 from Erwinia tasmaniensis (strain DSM 17950 / CFBP 7177 / CIP 109463 / NCPPB 4357 / Et1/99).